The sequence spans 543 residues: Cytochrome P450 1B1 (543 aa).

C470 is a binding site for heme.

This sequence belongs to the cytochrome P450 family. Heme serves as cofactor.

The protein resides in the endoplasmic reticulum membrane. Its subcellular location is the microsome membrane. It is found in the mitochondrion. The enzyme catalyses an organic molecule + reduced [NADPH--hemoprotein reductase] + O2 = an alcohol + oxidized [NADPH--hemoprotein reductase] + H2O + H(+). The catalysed reaction is 17beta-estradiol + reduced [NADPH--hemoprotein reductase] + O2 = 2-hydroxy-17beta-estradiol + oxidized [NADPH--hemoprotein reductase] + H2O + H(+). It carries out the reaction 17beta-estradiol + reduced [NADPH--hemoprotein reductase] + O2 = 4-hydroxy-17beta-estradiol + oxidized [NADPH--hemoprotein reductase] + H2O + H(+). It catalyses the reaction estrone + reduced [NADPH--hemoprotein reductase] + O2 = 2-hydroxyestrone + oxidized [NADPH--hemoprotein reductase] + H2O + H(+). The enzyme catalyses estrone + reduced [NADPH--hemoprotein reductase] + O2 = 4-hydroxyestrone + oxidized [NADPH--hemoprotein reductase] + H2O + H(+). The catalysed reaction is testosterone + reduced [NADPH--hemoprotein reductase] + O2 = 6beta,17beta-dihydroxyandrost-4-en-3-one + oxidized [NADPH--hemoprotein reductase] + H2O + H(+). It carries out the reaction progesterone + reduced [NADPH--hemoprotein reductase] + O2 = 6beta-hydroxyprogesterone + oxidized [NADPH--hemoprotein reductase] + H2O + H(+). It catalyses the reaction progesterone + reduced [NADPH--hemoprotein reductase] + O2 = 16alpha-hydroxyprogesterone + oxidized [NADPH--hemoprotein reductase] + H2O + H(+). The enzyme catalyses all-trans-retinol + reduced [NADPH--hemoprotein reductase] + O2 = all-trans-retinal + oxidized [NADPH--hemoprotein reductase] + 2 H2O + H(+). The catalysed reaction is all-trans-retinal + reduced [NADPH--hemoprotein reductase] + O2 = all-trans-retinoate + oxidized [NADPH--hemoprotein reductase] + H2O + 2 H(+). It carries out the reaction (5Z,8Z,11Z,14Z)-eicosatetraenoate + reduced [NADPH--hemoprotein reductase] + O2 = (8R,9S)-epoxy-(5Z,11Z,14Z)-eicosatrienoate + oxidized [NADPH--hemoprotein reductase] + H2O + H(+). It catalyses the reaction (5Z,8Z,11Z,14Z)-eicosatetraenoate + reduced [NADPH--hemoprotein reductase] + O2 = (11R,12S)-epoxy-(5Z,8Z,14Z)-eicosatrienoate + oxidized [NADPH--hemoprotein reductase] + H2O + H(+). The enzyme catalyses (5Z,8Z,11Z,14Z)-eicosatetraenoate + reduced [NADPH--hemoprotein reductase] + O2 = (11S,12R)-epoxy-(5Z,8Z,14Z)-eicosatrienoate + oxidized [NADPH--hemoprotein reductase] + H2O + H(+). The catalysed reaction is (5Z,8Z,11Z,14Z)-eicosatetraenoate + reduced [NADPH--hemoprotein reductase] + O2 = (14S,15R)-epoxy-(5Z,8Z,11Z)-eicosatrienoate + oxidized [NADPH--hemoprotein reductase] + H2O + H(+). It carries out the reaction (5Z,8Z,11Z,14Z)-eicosatetraenoate + reduced [NADPH--hemoprotein reductase] + O2 = (14R,15S)-epoxy-(5Z,8Z,11Z)-eicosatrienoate + oxidized [NADPH--hemoprotein reductase] + H2O + H(+). It catalyses the reaction (5S)-hydroperoxy-(6E,8Z,11Z,14Z)-eicosatetraenoate = 5-oxo-(6E,8Z,11Z,14Z)-eicosatetraenoate + H2O. The enzyme catalyses (12S)-hydroperoxy-(5Z,8Z,10E,14Z)-eicosatetraenoate = 12-oxo-(5Z,8Z,10E,14Z)-eicosatetraenoate + H2O. The catalysed reaction is (15S)-hydroperoxy-(5Z,8Z,11Z,13E)-eicosatetraenoate = 15-oxo-(5Z,8Z,11Z,13E)-eicosatetraenoate + H2O. It carries out the reaction (13S)-hydroperoxy-(9Z,11E)-octadecadienoate = 13-oxo-(9Z,11E)-octadecadienoate + H2O. The protein operates within steroid hormone biosynthesis. It participates in cofactor metabolism; retinol metabolism. Its pathway is lipid metabolism; arachidonate metabolism. With respect to regulation, enzyme activity is increased by cytochrome b5. Enzyme activity is increased by liposomes containing anionic phospholipids, phosphatidic acid and cardiolipin. Inhibited by naringenin with an IC(50) of 5 uM. Its function is as follows. A cytochrome P450 monooxygenase involved in the metabolism of various endogenous substrates, including fatty acids, steroid hormones and vitamins. Mechanistically, uses molecular oxygen inserting one oxygen atom into a substrate, and reducing the second into a water molecule, with two electrons provided by NADPH via cytochrome P450 reductase (NADPH--hemoprotein reductase). Exhibits catalytic activity for the formation of hydroxyestrogens from 17beta-estradiol (E2), namely 2- and 4-hydroxy E2. Metabolizes testosterone and progesterone to B or D ring hydroxylated metabolites. May act as a major enzyme for all-trans retinoic acid biosynthesis in extrahepatic tissues. Catalyzes two successive oxidative transformation of all-trans retinol to all-trans retinal and then to the active form all-trans retinoic acid. Catalyzes the epoxidation of double bonds of certain PUFA. Converts arachidonic acid toward epoxyeicosatrienoic acid (EpETrE) regioisomers, 8,9-, 11,12-, and 14,15- EpETrE, that function as lipid mediators in the vascular system. Additionally, displays dehydratase activity toward oxygenated eicosanoids including hydroperoxyeicosatetraenoates (HpETEs). This activity is independent of cytochrome P450 reductase, NADPH, and O2. Also involved in the oxidative metabolism of xenobiotics, particularly converting polycyclic aromatic hydrocarbons and heterocyclic aryl amines procarcinogens to DNA-damaging products. Plays an important role in retinal vascular development. Under ambient/hyperoxic O2 conditions, promotes angiogenesis and capillary morphogenesis of retinal endothelial cells and pericytes, likely by metabolizing the oxygenated products symptomatic of oxidative stress. Also, contributes to oxidative homeostasis and ultrastructural organization and function of trabecular meshwork tissue through modulation of POSTN expression. The chain is Cytochrome P450 1B1 from Rattus norvegicus (Rat).